A 155-amino-acid chain; its full sequence is Large ribosomal subunit protein eL19 (155 aa).

A compositionally biased stretch (basic residues) spans 66-84; that stretch reads VRHLQRRKGRRRGMGRRKG. Residues 66 to 85 are disordered; that stretch reads VRHLQRRKGRRRGMGRRKGV.

It belongs to the eukaryotic ribosomal protein eL19 family. As to quaternary structure, part of the 50S ribosomal subunit.

Its function is as follows. Binds to the 23S rRNA. This is Large ribosomal subunit protein eL19 from Aeropyrum pernix (strain ATCC 700893 / DSM 11879 / JCM 9820 / NBRC 100138 / K1).